The following is a 220-amino-acid chain: Inner membrane protein YqjA (220 aa).

Over 1-27 (MELLTQLLQALWAQDFETLANPSMIGM) the chain is Periplasmic. The helical transmembrane segment at 28–48 (LYFVLFVILFLENGLLPAAFL) threads the bilayer. The Cytoplasmic segment spans residues 49–52 (PGDS). 2 helical membrane-spanning segments follow: residues 53 to 73 (LLVL…QTIL) and 74 to 94 (LLTV…RWLG). Topologically, residues 95 to 154 (NTRTVQNWLSHLPAHYHQRAHHLFHKHGLSALLIGRFIAFVRTLLPTIAGLSGLNNARFQ) are cytoplasmic. Residues 155–175 (FFNWMSGLLWVLILTTLGYML) form a helical membrane-spanning segment. Residues 176 to 191 (GKTPVFLKYEDQLMSC) lie on the Periplasmic side of the membrane. Residues 192 to 212 (LMLLPVVLLVFGLAGSLVVLW) form a helical membrane-spanning segment. The Cytoplasmic portion of the chain corresponds to 213–220 (KKKYGNRG).

The protein belongs to the DedA family.

It localises to the cell inner membrane. May be a membrane transporter required for proton motive force (PMF)-dependent drug efflux. Required, with YghB, for the proper export of certain periplasmic amidases and, possibly, other Tat substrates. May play a role in determining membrane lipid composition. This chain is Inner membrane protein YqjA (yqjA), found in Escherichia coli (strain K12).